Consider the following 622-residue polypeptide: Palmitoyltransferase ZDHHC13 (622 aa).

M1 carries the post-translational modification N-acetylmethionine. Over M1 to E291 the chain is Cytoplasmic. 7 ANK repeats span residues P43–P78, E81–Q110, L115–L144, E148–M177, N181–V211, H216–I245, and K249–A277. A helical membrane pass occupies residues L292–F312. At N313–K320 the chain is on the lumenal side. The chain crosses the membrane as a helical span at residues G321–Y341. The Cytoplasmic portion of the chain corresponds to K342–L347. A helical transmembrane segment spans residues P348–F368. The Lumenal portion of the chain corresponds to P369–D370. A helical transmembrane segment spans residues L371 to F391. At Y392–Y470 the chain is on the cytoplasmic side. The DHHC domain maps to T426 to F476. The S-palmitoyl cysteine intermediate role is filled by C456. The helical transmembrane segment at Y471–I491 threads the bilayer. At Y492–P518 the chain is on the lumenal side. The helical transmembrane segment at W519 to L539 threads the bilayer. Residues N540–V622 are Cytoplasmic-facing.

The protein belongs to the DHHC palmitoyltransferase family. AKR/ZDHHC17 subfamily. In terms of assembly, interacts (via ANK repeats) with CLIP3. Interacts (via ANK repeats) with DNAJC5 (via C-terminus). Interacts (via ANK repeats) with HTT. Interacts (via ANK repeats) with MAP6. Interacts (via ANK repeats) with SNAP23. Interacts (via ANK repeats) with SNAP25. May interact (via ANK repeats) with SPRED2.

It is found in the golgi apparatus membrane. The protein localises to the cytoplasmic vesicle membrane. The catalysed reaction is L-cysteinyl-[protein] + hexadecanoyl-CoA = S-hexadecanoyl-L-cysteinyl-[protein] + CoA. In terms of biological role, palmitoyltransferase that could catalyze the addition of palmitate onto various protein substrates. Palmitoyltransferase for HTT and GAD2. May play a role in Mg(2+) transport. The protein is Palmitoyltransferase ZDHHC13 of Homo sapiens (Human).